Here is a 656-residue protein sequence, read N- to C-terminus: MAEAASLTFPDGSVRNVDAAMTGADIAESISKSLAKKAVAYAMDGSLRDLSDPVERSGKIEIITREDPRALELIRHDAAHVLAEAVQELWPGTQVTIGPVIENGFYYDFARNEPFTLDDLPVIEKKMREIVDRNKRFSKEVWPRDKAKKVFADKGESYKVELIDAIPEDQDLKIYFQGDWFDLCRGPHMASTGQIGKAFKLMKVAGAYWRGDSNRPMLTRIYGTAWADQQQLDSYLQMLEEAEKRDHRRLGREMDLFHFQEEGPGVVFWHAKGWRMFQNLVSYMRRRLDGVYQEVNAPQVLDHSLWQTSGHWGWYKENMFKVECADEEAEDKRTFALKPMNCPGHVQIFKHGLKSYRDLPIRLAEFGAVHRYEPSGALHGLMRVRGFTQDDAHIFCTEDQLAEECLKINDLILSTYADFGFEEIQVFFSTRPEKRVGSDALWDHAEEIMGGVLEQIAERSGGRIKTAINPGDGAFYGPKFDYVLKDAIGRQWQCGTTQVDFNLPERFGAFYIDKDSEKKQPVMIHRAICGSMERFLGILIENYAGHFPLWFAPLQVVVATITSDADDYARQVTQQLKAAGLTAEADLRNEKINYKVREHSLAKVPVILVCGKREAEEGSVNIRRLGSRDQASLLLAEAIAQLIDEATPPDIRRAKA.

The region spanning M1–T64 is the TGS domain. The catalytic stretch occupies residues D246–P548. Zn(2+)-binding residues include C342, H393, and H525.

This sequence belongs to the class-II aminoacyl-tRNA synthetase family. In terms of assembly, homodimer. It depends on Zn(2+) as a cofactor.

Its subcellular location is the cytoplasm. The enzyme catalyses tRNA(Thr) + L-threonine + ATP = L-threonyl-tRNA(Thr) + AMP + diphosphate + H(+). Functionally, catalyzes the attachment of threonine to tRNA(Thr) in a two-step reaction: L-threonine is first activated by ATP to form Thr-AMP and then transferred to the acceptor end of tRNA(Thr). Also edits incorrectly charged L-seryl-tRNA(Thr). The sequence is that of Threonine--tRNA ligase from Chelativorans sp. (strain BNC1).